The following is a 576-amino-acid chain: S-layer protein (576 aa).

An N-terminal signal peptide occupies residues 1 to 23; sequence KKIGAIAAGSAMVASALATGVFA. Asn102 and Asn132 each carry an N-linked (GlcNAc...) asparagine glycan.

It belongs to the Mj S-layer protein family. In terms of processing, N-linked glycans consist of the 779 Da trisaccharide beta-ManNAc(Thr)-(1-4)-beta-GlcNAc3NAcA-(1-3)-beta-GlcNAc.

Its subcellular location is the secreted. It localises to the cell wall. It is found in the S-layer. Functionally, S-layer protein. The S-layer is a paracrystalline mono-layered assembly of proteins which coat the surface of the cell. This is S-layer protein (sla) from Methanococcus voltae.